The sequence spans 154 residues: Superoxide dismutase [Cu-Zn] (154 aa).

3 residues coordinate Cu cation: His47, His49, and His64. A disulfide bridge links Cys58 with Cys147. Residues His64, His72, His81, and Asp84 each coordinate Zn(2+). Cu cation is bound at residue His121. Positions 125–136 (DDLGKGGNEESL) are enriched in basic and acidic residues. Residues 125 to 144 (DDLGKGGNEESLKTGNAGPR) are disordered. Arg144 contributes to the substrate binding site.

This sequence belongs to the Cu-Zn superoxide dismutase family. In terms of assembly, homodimer. The cofactor is Cu cation. Requires Zn(2+) as cofactor.

Its subcellular location is the cytoplasm. It catalyses the reaction 2 superoxide + 2 H(+) = H2O2 + O2. In terms of biological role, destroys radicals which are normally produced within the cells and which are toxic to biological systems. The protein is Superoxide dismutase [Cu-Zn] (SOD1) of Candida glabrata (strain ATCC 2001 / BCRC 20586 / JCM 3761 / NBRC 0622 / NRRL Y-65 / CBS 138) (Yeast).